Reading from the N-terminus, the 1683-residue chain is ABC transporter 7 (1683 aa).

The chain crosses the membrane as a helical span at residues 24–44; that stretch reads DYLRILLPAVVIGLSVLNLGF. Residues 53-93 are disordered; it reads RSKSPSTHAYAPVSNGDNSRPGAHRTDISPDDDAIAQDDED. A compositionally biased stretch (acidic residues) spans 81-93; the sequence is SPDDDAIAQDDED. 4 helical membrane passes run 127–147, 157–177, 190–210, and 221–241; these read LSVV…VIAL, TLTG…LATL, HLWN…IGIF, and LAQI…FMAI. N-linked (GlcNAc...) asparagine glycosylation occurs at N247. 2 helical membrane passes run 336–356 and 368–388; these read GWAV…KAIL and SVVW…SLGD. One can recognise an ABC transmembrane type-1 1 domain in the interval 338 to 664; the sequence is AVMSGMFTFA…LGDMLAHVQE (327 aa). The tract at residues 451–473 is disordered; it reads GDNDESEDGKDGDKDKEDSSDEQ. A glycan (N-linked (GlcNAc...) asparagine) is linked at N489. The next 2 helical transmembrane spans lie at 496–516 and 518–538; these read YLHF…VLLY and VLGM…PVNI. Residue N545 is glycosylated (N-linked (GlcNAc...) asparagine). A run of 2 helical transmembrane segments spans residues 602 to 622 and 632 to 648; these read VWAC…FFSF and PLHP…FMLL. Positions 700–949 constitute an ABC transporter 1 domain; that stretch reads IALKDAAFIW…GALGEEIAQK (250 aa). ATP is bound at residue 742–749; it reads GPTGSGKT. The disordered stretch occupies residues 952–998; sequence SETPNISRIPSRVPSSVGEGSGNTLLDTDGDDHLSKPKNAKKAKKAE. The N-linked (GlcNAc...) asparagine glycan is linked to N956. The helical transmembrane segment at 1016–1036 threads the bilayer; that stretch reads LYLASMGSWWFWVVAGCIFIS. The region spanning 1028-1351 is the ABC transmembrane type-1 2 domain; the sequence is VVAGCIFISQ…NILWLVRLYS (324 aa). A glycan (N-linked (GlcNAc...) asparagine) is linked at N1097. 3 consecutive transmembrane segments (helical) span residues 1111–1131, 1182–1202, and 1204–1224; these read AQYY…TAFL, VDQE…GITV, and VVLI…ITIA. N1277 is a glycosylation site (N-linked (GlcNAc...) asparagine). 2 helical membrane passes run 1304–1324 and 1327–1347; these read LLGD…IGVI and GWAG…LWLV. In terms of domain architecture, ABC transporter 2 spans 1392 to 1649; it reads VEFINYTTSY…GEGGSFKSMC (258 aa). Residues N1396 and N1411 are each glycosylated (N-linked (GlcNAc...) asparagine). 1426 to 1433 lines the ATP pocket; it reads GRTGAGKS. 2 N-linked (GlcNAc...) asparagine glycosylation sites follow: N1541 and N1552.

It belongs to the ABC transporter superfamily.

The protein localises to the membrane. In terms of biological role, ABC transporter; part of the gene cluster that mediates the biosynthesis of pyriculol and pyriculariol, two heptaketides that induce lesion formation upon application on rice leaves but are dispensable for pathogenicity. With the MFS transporter MFS1, is most likely responsible for pyriculol and pyriculariol secretion and thereby may contribute to intrinsic resistance. The sequence is that of ABC transporter 7 from Pyricularia oryzae (strain 70-15 / ATCC MYA-4617 / FGSC 8958) (Rice blast fungus).